The following is a 30-amino-acid chain: Ornithine carbamoyltransferase, catabolic (30 aa).

It belongs to the aspartate/ornithine carbamoyltransferase superfamily. OTCase family.

The protein resides in the cytoplasm. It carries out the reaction carbamoyl phosphate + L-ornithine = L-citrulline + phosphate + H(+). It functions in the pathway amino-acid degradation; L-arginine degradation via ADI pathway; carbamoyl phosphate from L-arginine: step 2/2. This Aeromonas caviae (Aeromonas punctata) protein is Ornithine carbamoyltransferase, catabolic (arcB).